The primary structure comprises 317 residues: Glycerol-3-phosphate dehydrogenase [NAD(P)+] (317 aa).

Ser-14, Phe-15, Arg-35, and Lys-109 together coordinate NADPH. Residues Lys-109 and Gly-137 each coordinate sn-glycerol 3-phosphate. An NADPH-binding site is contributed by Ala-141. Lys-192, Asp-248, Ser-258, Arg-259, and Asn-260 together coordinate sn-glycerol 3-phosphate. The active-site Proton acceptor is the Lys-192. Arg-259 provides a ligand contact to NADPH. NADPH is bound by residues Leu-283 and Glu-285.

Belongs to the NAD-dependent glycerol-3-phosphate dehydrogenase family.

It is found in the cytoplasm. It catalyses the reaction sn-glycerol 3-phosphate + NAD(+) = dihydroxyacetone phosphate + NADH + H(+). It carries out the reaction sn-glycerol 3-phosphate + NADP(+) = dihydroxyacetone phosphate + NADPH + H(+). The protein operates within membrane lipid metabolism; glycerophospholipid metabolism. Catalyzes the reduction of the glycolytic intermediate dihydroxyacetone phosphate (DHAP) to sn-glycerol 3-phosphate (G3P), the key precursor for phospholipid synthesis. The protein is Glycerol-3-phosphate dehydrogenase [NAD(P)+] of Rickettsia akari (strain Hartford).